Consider the following 2944-residue polypeptide: Collagen alpha-1(VII) chain (2944 aa).

The N-terminal stretch at 1–24 (MRLRLLVAALCAAEILMGAPEVWA) is a signal peptide. The segment at 18–1254 (GAPEVWAQPR…TGPCAVHCPK (1237 aa)) is nonhelical region (NC1). The VWFA 1 domain maps to 39–212 (DIVFLLDGSS…SILRTLLPLI (174 aa)). Fibronectin type-III domains are found at residues 235 to 330 (GPRD…TAKE), 331 to 417 (GLEL…TASS), 418 to 508 (VEQT…LEQL), 511 to 598 (PVMN…DPEA), 601 to 688 (VVPG…DPLG), 689 to 776 (PVRR…APEP), 779 to 867 (SVSK…PPAT), 870 to 957 (LLET…EPSH), and 959 to 1053 (PSTE…SHGP). N-linked (GlcNAc...) asparagine glycosylation is present at Asn-338. Asn-787 carries N-linked (GlcNAc...) asparagine glycosylation. One can recognise a VWFA 2 domain in the interval 1055–1230 (DVVFLLHATR…PGLDRAVSDL (176 aa)). The N-linked (GlcNAc...) asparagine glycan is linked to Asn-1110. The short motif at 1171-1173 (RGD) is the Cell attachment site element. Positions 1255-1475 (GQKGEPGVTG…GLRGAPGMTG (221 aa)) are interrupted collagenous region. Positions 1255 to 2775 (GQKGEPGVTG…GPRGEKGEAA (1521 aa)) are triple-helical region. Disordered regions lie at residues 1259–1934 (EPGV…GSLP) and 1960–2773 (SSGS…EKGE). Low complexity predominate over residues 1338-1352 (RGPQGPKGEPGEPGQ). Gly residues predominate over residues 1353–1363 (ITGGGGPGFPG). Basic and acidic residues-rich tracts occupy residues 1397–1406 (KGDKGDRGER) and 1439–1448 (PGEKGEKGDC). Over residues 1507–1518 (PGAAGHPGVEGP) the composition is skewed to low complexity. Basic and acidic residues-rich tracts occupy residues 1527-1536 (RRGEKGEPGR), 1627-1639 (RGRD…KGDE), and 1666-1680 (VGEK…EDGR). Over residues 1813 to 1822 (PPGPPGPPGV) the composition is skewed to pro residues. Composition is skewed to basic and acidic residues over residues 1846-1855 (EDGRKGEKGD), 1862-1871 (EGPDGPKGER), and 1968-1984 (PERR…RGPP). The short motif at 2002 to 2004 (RGD) is the Cell attachment site element. The span at 2040–2049 (GRAGGSGEAG) shows a compositional bias: gly residues. The span at 2050-2068 (RPGERGERGEKGERGDQGR) shows a compositional bias: basic and acidic residues. A Cell attachment site motif is present at residues 2063 to 2065 (RGD). Pro residues predominate over residues 2074-2083 (LPGPPGPPGP). Positions 2130–2140 (DVGEPGKRGHD) are enriched in basic and acidic residues. Pro-2158, Pro-2167, Pro-2176, and Pro-2179 each carry 4-hydroxyproline. Composition is skewed to low complexity over residues 2182 to 2197 (PGLA…SGLK), 2226 to 2241 (SGLV…PGQV), 2279 to 2299 (PKGE…PPGA), and 2306 to 2317 (PGDLAGALLGEP). Over residues 2319 to 2335 (AKGDRGLPGPRGEKGEA) the composition is skewed to basic and acidic residues. A compositionally biased stretch (low complexity) spans 2414–2427 (ERGLAGPPGREGAP). 2 stretches are compositionally biased toward basic and acidic residues: residues 2462–2477 (RGER…DGHP) and 2525–2544 (AKGD…KGPR). Positions 2576–2594 (PKGEPGAAGIPGEPGAPGK) are enriched in low complexity. Positions 2601-2603 (RGD) match the Cell attachment site motif. The span at 2615–2636 (LKGEKGIKGTCGRDGERGDKGE) shows a compositional bias: basic and acidic residues. 5-hydroxylysine is present on residues Lys-2616 and Lys-2622. A Cell attachment site motif is present at residues 2631–2633 (RGD). 4-hydroxyproline occurs at positions 2655, 2658, and 2664. The span at 2695-2704 (GPPGVGGFPG) shows a compositional bias: gly residues. The nonhelical region (NC2) stretch occupies residues 2776–2944 (LTEDDIRDFV…GVHSQKTGAA (169 aa)). The region spanning 2879-2931 (CSLPLDEGSCTAYTLRWYHRAVPGGTACHPFVYGGCGGNANRFGTREACERRC) is the BPTI/Kunitz inhibitor domain. Intrachain disulfides connect Cys-2879–Cys-2931, Cys-2888–Cys-2914, and Cys-2906–Cys-2927.

In terms of assembly, homotrimer. Interacts with MIA3/TANGO1; facilitating its loading into transport carriers and subsequent secretion. In terms of processing, prolines at the third position of the tripeptide repeating unit (G-X-Y) are hydroxylated in some or all of the chains.

It is found in the secreted. The protein resides in the extracellular space. Its subcellular location is the extracellular matrix. It localises to the basement membrane. Its function is as follows. Stratified squamous epithelial basement membrane protein that forms anchoring fibrils which may contribute to epithelial basement membrane organization and adherence by interacting with extracellular matrix (ECM) proteins such as type IV collagen. This chain is Collagen alpha-1(VII) chain, found in Mus musculus (Mouse).